We begin with the raw amino-acid sequence, 146 residues long: uncharacterized protein (146 aa).

This is an uncharacterized protein from Orgyia pseudotsugata multicapsid polyhedrosis virus (OpMNPV).